Here is a 306-residue protein sequence, read N- to C-terminus: Putative B3 domain-containing protein Os03g0621600 (306 aa).

Residues 29 to 122 (FSVLCLMPIM…QLKTLIFDSS (94 aa)) constitute a DNA-binding region (TF-B3 1). The tract at residues 139-166 (YDIAMRNSQDEKKKRKQRDISRQGTVKP) is disordered. Positions 210-306 (GYVMNNSSIH…VMDVHIIRRK (97 aa)) form a DNA-binding region, TF-B3 2.

The protein localises to the nucleus. In Oryza sativa subsp. japonica (Rice), this protein is Putative B3 domain-containing protein Os03g0621600.